The chain runs to 398 residues: Bifunctional enzyme IspD/IspF (398 aa).

The tract at residues 1 to 234 is 2-C-methyl-D-erythritol 4-phosphate cytidylyltransferase; it reads MTNSPRTAAI…SRLMAALGDI (234 aa). The interval 235–398 is 2-C-methyl-D-erythritol 2,4-cyclodiphosphate synthase; that stretch reads RTGTGYDVHA…LPWGADGLAG (164 aa). A divalent metal cation is bound by residues D241 and H243. Residues 241–243 and 267–268 contribute to the 4-CDP-2-C-methyl-D-erythritol 2-phosphate site; these read DVH and HS. A divalent metal cation is bound at residue H275. 4-CDP-2-C-methyl-D-erythritol 2-phosphate contacts are provided by residues 289-291, 365-368, F372, and R375; these read DIG and TTSE.

This sequence in the N-terminal section; belongs to the IspD/TarI cytidylyltransferase family. IspD subfamily. It in the C-terminal section; belongs to the IspF family. A divalent metal cation is required as a cofactor.

It carries out the reaction 2-C-methyl-D-erythritol 4-phosphate + CTP + H(+) = 4-CDP-2-C-methyl-D-erythritol + diphosphate. The enzyme catalyses 4-CDP-2-C-methyl-D-erythritol 2-phosphate = 2-C-methyl-D-erythritol 2,4-cyclic diphosphate + CMP. It participates in isoprenoid biosynthesis; isopentenyl diphosphate biosynthesis via DXP pathway; isopentenyl diphosphate from 1-deoxy-D-xylulose 5-phosphate: step 2/6. Its pathway is isoprenoid biosynthesis; isopentenyl diphosphate biosynthesis via DXP pathway; isopentenyl diphosphate from 1-deoxy-D-xylulose 5-phosphate: step 4/6. Functionally, bifunctional enzyme that catalyzes the formation of 4-diphosphocytidyl-2-C-methyl-D-erythritol from CTP and 2-C-methyl-D-erythritol 4-phosphate (MEP) (IspD), and catalyzes the conversion of 4-diphosphocytidyl-2-C-methyl-D-erythritol 2-phosphate (CDP-ME2P) to 2-C-methyl-D-erythritol 2,4-cyclodiphosphate (ME-CPP) with a corresponding release of cytidine 5-monophosphate (CMP) (IspF). This Rhodopseudomonas palustris (strain TIE-1) protein is Bifunctional enzyme IspD/IspF.